A 977-amino-acid polypeptide reads, in one-letter code: Glutamate receptor 2 (977 aa).

Residues 1 to 19 (MNKNLLVFGFLIFVKIGET) form the signal peptide. At 20 to 621 (SKKFPLRAFV…FSFMEPLGMT (602 aa)) the chain is on the extracellular side. N-linked (GlcNAc...) asparagine glycans are attached at residues asparagine 36, asparagine 227, asparagine 291, asparagine 427, asparagine 532, and asparagine 566. Residues 622–642 (IWIFTLSSYFGVSLTIFLVSW) form a helical membrane-spanning segment. Residues 643–695 (FSPYEKRIEFKRGEFTVTNEFTLYNSLWFTLAAFMQQGTDILPRAVSGRIASS) are Cytoplasmic-facing. Residues 696 to 716 (CWWFFTLIIVSSYTANLAAFL) traverse the membrane as a helical segment. Residues 717-898 (TLERMTPPIE…GTSSSLNLSK (182 aa)) are Extracellular-facing. N-linked (GlcNAc...) asparagine glycans are attached at residues asparagine 783 and asparagine 895. A helical transmembrane segment spans residues 899–919 (VAGIFYILLAGMVLSMCTALV). At 920-977 (EFLFRKNKENREKERNRMRSSRPLKPGILASCERAKQKQLQNRRTKSEEVSTPRSTLF) the chain is on the cytoplasmic side. Residues 954 to 977 (AKQKQLQNRRTKSEEVSTPRSTLF) are disordered.

Belongs to the glutamate-gated ion channel (TC 1.A.10.1) family. Command interneurons of the locomotory control circuit (AIA, AIB, AVA, AVD, AVE, PVC, RIA, RIG and RIR) and motor neurons (AVG, M1, RMDD and RMDV).

The protein localises to the membrane. The protein resides in the postsynaptic cell membrane. Functionally, L-glutamate acts as an excitatory neurotransmitter at many synapses in the central nervous system. The postsynaptic actions of glutamate are mediated by a variety of receptors that are named according to their selective agonists. Required for response to mechanical and osmotic stimuli. This Caenorhabditis elegans protein is Glutamate receptor 2 (glr-2).